Reading from the N-terminus, the 369-residue chain is Putative gustatory receptor 39b (369 aa).

Over 1–32 (MLYSFHPYLKYFALLGLVPWSESCAQSKFVQK) the chain is Cytoplasmic. The chain crosses the membrane as a helical span at residues 33–53 (VYSAILIILNAVHFGISIYFP). Residues 54-59 (QSAELF) lie on the Extracellular side of the membrane. A helical membrane pass occupies residues 60-80 (LSLMVNVIVFVARIVCVTVII). Topologically, residues 81-122 (LQVMVHYDDYFRFCREMKYLGLRLQCELKIHVGRLKWQSYAK) are cytoplasmic. A helical transmembrane segment spans residues 123-143 (ILALGIGFLVTVLPSIYVALS). At 144–147 (GSLL) the chain is on the extracellular side. Residues 148-168 (YFWSSLLSILIIRMQFVLVLL) traverse the membrane as a helical segment. Residues 169–224 (NVELLGHHVSLLGIRLQNVLECHLMGANCTLDGNANRLCSLEFLLALKQSHMQLHY) lie on the Cytoplasmic side of the membrane. Residues 225-245 (LFTHFNDLFGWSILGTYVVLF) traverse the membrane as a helical segment. Over 246–265 (SDSTVNIYWTQQVLVEVYEY) the chain is Extracellular. The chain crosses the membrane as a helical span at residues 266–286 (KYLYATFSVFVPSFFNILVFC). Topologically, residues 287 to 348 (RCGEFCQRQS…EGFMSTDNSL (62 aa)) are cytoplasmic. Residues 349 to 368 (LMSILAAKVTYLIVLMQFSS) traverse the membrane as a helical segment. Valine 369 is a topological domain (extracellular).

The protein belongs to the insect chemoreceptor superfamily. Gustatory receptor (GR) family. Gr2a subfamily. In terms of tissue distribution, expressed in the adult labellar chemosensory neurons and in abdominal ganglions. In larvae, is expressed in neurons of the dorsal and posterior pharyngeal sense organs.

Its subcellular location is the cell membrane. Functionally, probable gustatory receptor which mediates acceptance or avoidance behavior, depending on its substrates. Has also atypical sensory function in organ not limited to conventional taste sensing like abdominal ganglions. The sequence is that of Putative gustatory receptor 39b (Gr39b) from Drosophila melanogaster (Fruit fly).